Here is a 169-residue protein sequence, read N- to C-terminus: Large ribosomal subunit protein uL10 (169 aa).

This sequence belongs to the universal ribosomal protein uL10 family. In terms of assembly, part of the ribosomal stalk of the 50S ribosomal subunit. The N-terminus interacts with L11 and the large rRNA to form the base of the stalk. The C-terminus forms an elongated spine to which L12 dimers bind in a sequential fashion forming a multimeric L10(L12)X complex.

In terms of biological role, forms part of the ribosomal stalk, playing a central role in the interaction of the ribosome with GTP-bound translation factors. The sequence is that of Large ribosomal subunit protein uL10 from Rickettsia massiliae (strain Mtu5).